Here is a 424-residue protein sequence, read N- to C-terminus: GTPase HflX (424 aa).

The Hflx-type G domain occupies 194-364; the sequence is YTVALTGYTG…AVVEMLPEKV (171 aa). GTP-binding positions include 200 to 207, 225 to 229, 246 to 249, 314 to 317, and 342 to 344; these read GYTGAGKT, FATLS, DTIG, NKID, and SAA. Residues T207 and T227 each coordinate Mg(2+).

Belongs to the TRAFAC class OBG-HflX-like GTPase superfamily. HflX GTPase family. In terms of assembly, monomer. Associates with the 50S ribosomal subunit. Mg(2+) serves as cofactor.

It is found in the cytoplasm. In terms of biological role, GTPase that associates with the 50S ribosomal subunit and may have a role during protein synthesis or ribosome biogenesis. The sequence is that of GTPase HflX from Thermofilum pendens (strain DSM 2475 / Hrk 5).